A 505-amino-acid chain; its full sequence is Folate transporter 1 (505 aa).

4 consecutive transmembrane segments (helical) span residues 58–78 (SLIAMLQGVEVLCNLSIIYLL), 89–109 (LSIVMCFIKIPWSIKLVWAVI), 122–142 (YYLLLGSFLCILSLICLGLIT), and 146–166 (LFITILLLFIYFFGSSLCNVI). N-linked (GlcNAc...) asparagine glycans are attached at residues Asn-177, Asn-181, and Asn-186. A run of 2 helical transmembrane segments spans residues 192–212 (AFRKLSFAIMSYLSGYLLLLI) and 216–236 (HIFLIGSFLPICVFTSGFFII). N-linked (GlcNAc...) asparagine glycosylation is present at Asn-240. 5 helical membrane-spanning segments follow: residues 266 to 286 (IIFIFIMMSTPSCGNTLFFYI), 300 to 320 (MAMFQSLASFISIISYMLFFT), 326 to 346 (KLLLYSTIIITPFCLLPLVVI), 352 to 372 (FLFIPNTLFFITDTVLIEFIA), and 405 to 425 (FASIISSFLSSLLTYSLNITS). A glycan (N-linked (GlcNAc...) asparagine) is linked at Asn-427. A helical transmembrane segment spans residues 431–451 (LPYMIIICCLTNIIPIFFLYI). N-linked (GlcNAc...) asparagine glycosylation is present at Asn-454.

Belongs to the major facilitator superfamily. Folate-biopterin transporter (TC 2.A.71) family.

The protein localises to the cell membrane. It carries out the reaction folate(in) + H(+)(in) = folate(out) + H(+)(out). Its activity is regulated as follows. Transport of folates is inhibited by probenecid and methotrexate. Folate transporter with broad substrate specificity. Transports folic acid, folinic acid, pteroic acid, dihydropteroic acid, the folate precursor p-amino benzoic acid (pABA) and the human folate catabolite pABA monoglutamate. In Plasmodium falciparum (isolate 3D7), this protein is Folate transporter 1.